Here is a 363-residue protein sequence, read N- to C-terminus: Adenosine deaminase (363 aa).

Zn(2+)-binding residues include H42 and H44. Residues 44 to 46 (HLD), D172, and G201 contribute to the a purine D-ribonucleoside site. A gating helix loop; regulates binding affinity for substrates and thus substrate selectivity region spans residues 170–184 (IGDTGHEAANIKASA). H226 lines the Zn(2+) pocket. The a purine D-ribonucleoside site is built by E229, H253, and D310. Residue D310 coordinates Zn(2+).

This sequence belongs to the metallo-dependent hydrolases superfamily. Adenosine and AMP deaminases family. Zn(2+) is required as a cofactor.

It catalyses the reaction adenosine + H2O + H(+) = inosine + NH4(+). The catalysed reaction is S-methyl-5'-thioadenosine + H2O + H(+) = S-methyl-5'-thioinosine + NH4(+). It participates in purine metabolism; purine nucleoside salvage. With respect to regulation, inhibited by coformycin and methylthiocoformycin (MT-coformycin). Catalyzes the hydrolytic deamination of adenosine to produce inosine. Unlike mammalian adenosine deaminases, also catalyzes the deamination of 5'-methylthioadenosine (MTA), a by-product of polyamine biosynthesis, to produce 5'-methylthioinosine (MTI). Plays an essential role in the purine salvage pathway which allows the parasite to use host cell purines for the synthesis of nucleic acids. This Plasmodium vivax (strain Salvador I) protein is Adenosine deaminase.